Here is a 562-residue protein sequence, read N- to C-terminus: Scaffold protein FimL (562 aa).

Interacts with PilG and FimV.

The protein resides in the cytoplasm. Its function is as follows. Regulates multiple virulence functions including type IV pilus (T4P)-mediated assembly and twitching motility as well as cAMP-dependent virulence gene expression. Regulates intracellular cyclic AMP (cAMP) levels through the activation of adenylate cyclase CyaB. Also functions as a scaffold linking FimV and PilG at the pole, where type IV pilus (T4P), the Chp chemosensory system and the CyaB adenylate cyclase interact. This Pseudomonas aeruginosa (strain ATCC 15692 / DSM 22644 / CIP 104116 / JCM 14847 / LMG 12228 / 1C / PRS 101 / PAO1) protein is Scaffold protein FimL (fimL).